Here is a 338-residue protein sequence, read N- to C-terminus: MMKKIAVLGAGSWGSILANLLDENGHSVRLWSYSPAQVTELNEKHTNERYVPDFKYSETLTAYSNLTQAIDGADVILFVVPTKAIREVAQQVTAVLAKTHQRPIIVHASKGLEQETHKRLSQVLAEEIPTELRQAIVVLSGPSHAEEVARHDITLITAASADESAAELVQQLFMNDYFRIYTNTDVVGVELGAALKNIIALGAGALHGLGYGDDAKAALMTRGLAEISRLGVALGAEPLTFIGLSGVGDLIVTATSVHSRNWRAGNELGAGQDLKTVIDTMGMVIEGIPSTKAAYELAQQQNIEMPITEAIYDVLYKSADIKEVIPQLMRREGKPEIQ.

NADPH contacts are provided by S12, W13, and K110. The sn-glycerol 3-phosphate site is built by K110, G141, and S143. A145 lines the NADPH pocket. Sn-glycerol 3-phosphate is bound by residues K196, D249, S259, R260, and N261. The Proton acceptor role is filled by K196. R260 contacts NADPH. Residues V284 and E286 each contribute to the NADPH site.

Belongs to the NAD-dependent glycerol-3-phosphate dehydrogenase family.

The protein localises to the cytoplasm. It carries out the reaction sn-glycerol 3-phosphate + NAD(+) = dihydroxyacetone phosphate + NADH + H(+). The catalysed reaction is sn-glycerol 3-phosphate + NADP(+) = dihydroxyacetone phosphate + NADPH + H(+). Its pathway is membrane lipid metabolism; glycerophospholipid metabolism. Its function is as follows. Catalyzes the reduction of the glycolytic intermediate dihydroxyacetone phosphate (DHAP) to sn-glycerol 3-phosphate (G3P), the key precursor for phospholipid synthesis. The chain is Glycerol-3-phosphate dehydrogenase [NAD(P)+] from Lactiplantibacillus plantarum (strain ATCC BAA-793 / NCIMB 8826 / WCFS1) (Lactobacillus plantarum).